Reading from the N-terminus, the 112-residue chain is UPF0482 protein SG1468 (112 aa).

An N-terminal signal peptide occupies residues 1–22 (MNTIPTRCLLGGLLALSLLAYA).

It belongs to the UPF0482 family.

In Sodalis glossinidius (strain morsitans), this protein is UPF0482 protein SG1468.